Here is a 53-residue protein sequence, read N- to C-terminus: Sec-independent protein translocase protein TatA (53 aa).

The helical transmembrane segment at Met1–Ala21 threads the bilayer.

The protein belongs to the TatA/E family. As to quaternary structure, the Tat system comprises two distinct complexes: a TatABC complex, containing multiple copies of TatA, TatB and TatC subunits, and a separate TatA complex, containing only TatA subunits. Substrates initially bind to the TatABC complex, which probably triggers association of the separate TatA complex to form the active translocon.

It is found in the cell inner membrane. In terms of biological role, part of the twin-arginine translocation (Tat) system that transports large folded proteins containing a characteristic twin-arginine motif in their signal peptide across membranes. TatA could form the protein-conducting channel of the Tat system. This Rickettsia typhi (strain ATCC VR-144 / Wilmington) protein is Sec-independent protein translocase protein TatA.